Consider the following 546-residue polypeptide: MFS-type transporter GME11371 (546 aa).

7 helical membrane-spanning segments follow: residues 39 to 59 (LTYLFLALILCMLLAVIDLTI), 77 to 96 (IGWYASVFFMTVASSQSSWG), 107 to 127 (MFLLAMGIFELGNVICGAAPT), 137 to 157 (ITGIGAAGVIAGCFTVAAFAV), 167 to 187 (GGLAATYGVGSSIGPIIGGVL), 195 to 215 (WCFYINLPIGGFAAIVLFLFF), and 240 to 260 (FPGFFCCIAAVTCLLLALLWG). N-linked (GlcNAc...) asparagine glycosylation occurs at N267. A run of 7 helical transmembrane segments spans residues 270–290 (DVIGTLVGFFLFTALFAVVEW), 307–327 (VVLFGTIGGFFAGGAQFVLVY), 349–369 (LPYIIGSTITTIVAGTTISAT), 370–390 (GYFTPLIVGGGALWTVSAGLI), 402–422 (WIGYQALAGLAVGLCYQPPIL), 433–453 (VAATSAILLFFQTMGGAFMVS), and 509–529 (ISFAIIIALTGASTVAGIFMP).

It belongs to the major facilitator superfamily.

The protein localises to the cell membrane. It functions in the pathway secondary metabolite biosynthesis. MFS-type transporter; part of the gene cluster that mediates the biosynthesis of dibenzodioxocinones such as pestalotiollide B, a novel class of inhibitors against cholesterol ester transfer protein (CEPT). essential for dibenzodioxocinones biosynthesis and may be involved in the secretion of the cluster products. The chain is MFS-type transporter GME11371 from Pestalotiopsis microspora.